The primary structure comprises 199 residues: Fe/S biogenesis protein NfuA (199 aa).

The [4Fe-4S] cluster site is built by Cys151 and Cys154.

The protein belongs to the NfuA family. As to quaternary structure, homodimer. The cofactor is [4Fe-4S] cluster.

Its function is as follows. Involved in iron-sulfur cluster biogenesis. Binds a 4Fe-4S cluster, can transfer this cluster to apoproteins, and thereby intervenes in the maturation of Fe/S proteins. Could also act as a scaffold/chaperone for damaged Fe/S proteins. The polypeptide is Fe/S biogenesis protein NfuA (Stenotrophomonas maltophilia (strain K279a)).